Here is a 923-residue protein sequence, read N- to C-terminus: Periplasmic nitrate reductase (923 aa).

The segment at residues 1–30 (MNRRDFIKNTAIASAASVAGLSVPSSMLGA) is a signal peptide (tat-type signal). Residues 34-90 (WKWDKAVCRFCGTGCGIMIARKDGKIVATKGDPAAPVNRGLNCIKGYFNAKIMYGED) enclose the 4Fe-4S Mo/W bis-MGD-type domain. Residues Cys41, Cys44, Cys48, and Cys76 each contribute to the [4Fe-4S] cluster site. Residues Lys78, Gln146, Asn171, Cys175, 208-215 (WGANMAEM), Met416, Gln420, Asn526, 551-552 (SD), Lys574, Asp601, and 813-822 (TGRVLEHWHS) each bind Mo-bis(molybdopterin guanine dinucleotide). Trp889 is a binding site for substrate. Mo-bis(molybdopterin guanine dinucleotide) is bound by residues Asn897 and Lys914.

This sequence belongs to the prokaryotic molybdopterin-containing oxidoreductase family. NasA/NapA/NarB subfamily. As to quaternary structure, component of the periplasmic nitrate reductase NapAB complex composed of NapA and NapB. [4Fe-4S] cluster is required as a cofactor. Requires Mo-bis(molybdopterin guanine dinucleotide) as cofactor. Predicted to be exported by the Tat system. The position of the signal peptide cleavage has not been experimentally proven.

The protein resides in the periplasm. The enzyme catalyses 2 Fe(II)-[cytochrome] + nitrate + 2 H(+) = 2 Fe(III)-[cytochrome] + nitrite + H2O. In terms of biological role, catalytic subunit of the periplasmic nitrate reductase complex NapAB. Receives electrons from NapB and catalyzes the reduction of nitrate to nitrite. The polypeptide is Periplasmic nitrate reductase (Campylobacter jejuni subsp. jejuni serotype O:23/36 (strain 81-176)).